A 216-amino-acid polypeptide reads, in one-letter code: Nucleoside triphosphate pyrophosphatase (216 aa).

D82 acts as the Proton acceptor in catalysis.

Belongs to the Maf family. A divalent metal cation is required as a cofactor.

The protein resides in the cytoplasm. It carries out the reaction a ribonucleoside 5'-triphosphate + H2O = a ribonucleoside 5'-phosphate + diphosphate + H(+). The enzyme catalyses a 2'-deoxyribonucleoside 5'-triphosphate + H2O = a 2'-deoxyribonucleoside 5'-phosphate + diphosphate + H(+). In terms of biological role, nucleoside triphosphate pyrophosphatase. May have a dual role in cell division arrest and in preventing the incorporation of modified nucleotides into cellular nucleic acids. In Mycobacterium ulcerans (strain Agy99), this protein is Nucleoside triphosphate pyrophosphatase.